The primary structure comprises 384 residues: S-adenosylmethionine synthase (384 aa).

Histidine 16 contributes to the ATP binding site. Position 18 (aspartate 18) interacts with Mg(2+). Glutamate 44 serves as a coordination point for K(+). L-methionine-binding residues include glutamate 57 and glutamine 100. The flexible loop stretch occupies residues 100–110 (QSADIAMGVDE). Residues 165–167 (DAK), aspartate 240, 246–247 (RK), alanine 263, and lysine 267 contribute to the ATP site. Residue aspartate 240 coordinates L-methionine. Lysine 271 contacts L-methionine.

It belongs to the AdoMet synthase family. As to quaternary structure, homotetramer; dimer of dimers. Requires Mg(2+) as cofactor. K(+) serves as cofactor.

The protein resides in the cytoplasm. It catalyses the reaction L-methionine + ATP + H2O = S-adenosyl-L-methionine + phosphate + diphosphate. The protein operates within amino-acid biosynthesis; S-adenosyl-L-methionine biosynthesis; S-adenosyl-L-methionine from L-methionine: step 1/1. Functionally, catalyzes the formation of S-adenosylmethionine (AdoMet) from methionine and ATP. The overall synthetic reaction is composed of two sequential steps, AdoMet formation and the subsequent tripolyphosphate hydrolysis which occurs prior to release of AdoMet from the enzyme. The protein is S-adenosylmethionine synthase of Teredinibacter turnerae (strain ATCC 39867 / T7901).